The sequence spans 475 residues: Ras-GEF domain-containing family member 1B-B (475 aa).

Polar residues predominate over residues 1-19; that stretch reads MPQTTPYSSKFNPSAYSSS. Residues 1–25 form a disordered region; sequence MPQTTPYSSKFNPSAYSSSHSHRQP. Residues 36-166 enclose the N-terminal Ras-GEF domain; sequence RDNKLVSGSL…LIQRLLRKLT (131 aa). The region spanning 209-456 is the Ras-GEF domain; the sequence is DPFIFAQQLT…QLASYESEGP (248 aa). Positions 452–475 are disordered; that stretch reads ESEGPENNLERDTRRSLRSSLSRM.

In terms of biological role, guanine nucleotide exchange factor (GEF) for Ras family proteins. The sequence is that of Ras-GEF domain-containing family member 1B-B from Danio rerio (Zebrafish).